A 471-amino-acid chain; its full sequence is MSSSSSTSPRFGSMISAKLASPPPSLLLPPSPRLQGRRLTPPSCTPGTPAALPSPGPDKEPEREAAGSGSGSATTPRSPAQLGSSQLHRWSRARAHRSGRRLEWPTIRDRGSGGASSPPTPTRPHPSSDEAASAAAKVAVEEEDGYGVVGRDEAAKSIYMVSDGTGWTAEHSVNAALGQFEHCLVDRGCAVNTHLFNGIDDMDRLIEIVKQAAKEGALVLYTLADPSMAEATKKACELWGVPSNDILRPTIEAIASHIGVAPSGIPRSSPSRKGQLTEDYFRRIEAIDFTIKQDDGAQPQNLNRAHIVLVGVSRTGKTPLSIYLAQKGYKVANVPIVMGVNLPKSLFEIDQDKIFGLTINPVVLQAIRKARAKTLGFHGQKSNYAEMEHVRGELDHANQIFAQHPIWPVIEVTGKAIEETAAVVVRIFHDRKQKCAMPRISKRVAPIRIYDYLSEMVNTHVEYQKIFARDF.

A chloroplast-targeting transit peptide spans 1 to 49 (MSSSSSTSPRFGSMISAKLASPPPSLLLPPSPRLQGRRLTPPSCTPGTP). Residues 1–133 (MSSSSSTSPR…PHPSSDEAAS (133 aa)) form a disordered region. Pro residues predominate over residues 21–32 (SPPPSLLLPPSP). Over residues 71 to 88 (GSATTPRSPAQLGSSQLH) the composition is skewed to polar residues. A compositionally biased stretch (basic residues) spans 89-99 (RWSRARAHRSG). A compositionally biased stretch (basic and acidic residues) spans 100 to 111 (RRLEWPTIRDRG). 171–178 (HSVNAALG) is an ADP binding site.

The protein belongs to the pyruvate, phosphate/water dikinase regulatory protein family. PDRP subfamily.

The protein resides in the plastid. Its subcellular location is the chloroplast. The catalysed reaction is N(tele)-phospho-L-histidyl/L-threonyl-[pyruvate, phosphate dikinase] + ADP = N(tele)-phospho-L-histidyl/O-phospho-L-threonyl-[pyruvate, phosphate dikinase] + AMP + H(+). It catalyses the reaction N(tele)-phospho-L-histidyl/O-phospho-L-threonyl-[pyruvate, phosphate dikinase] + phosphate + H(+) = N(tele)-phospho-L-histidyl/L-threonyl-[pyruvate, phosphate dikinase] + diphosphate. Its activity is regulated as follows. Regulated by light/dark exposure. Its function is as follows. Bifunctional serine/threonine kinase and phosphorylase involved in the dark/light-mediated regulation of PPDK by catalyzing its phosphorylation/dephosphorylation. Dark/light-induced changes in stromal concentrations of the competing ADP and Pi substrates govern the direction of the reaction. In the dark, phosphorylates the catalytic intermediate of PPDK (PPDK-HisP), inactivating it. Light exposure induces the phosphorolysis reaction that reactivates PPDK. In Oryza sativa subsp. indica (Rice), this protein is Probable pyruvate, phosphate dikinase regulatory protein, chloroplastic (PDRP1).